The chain runs to 340 residues: Fructose-1,6-bisphosphatase class 1 (340 aa).

The Mg(2+) site is built by Glu107, Asp126, Leu128, and Asp129. Position 215 (Asn215) interacts with substrate. Glu287 is a binding site for Mg(2+).

It belongs to the FBPase class 1 family. Homotetramer. Mg(2+) is required as a cofactor.

The protein resides in the cytoplasm. The enzyme catalyses beta-D-fructose 1,6-bisphosphate + H2O = beta-D-fructose 6-phosphate + phosphate. The protein operates within carbohydrate biosynthesis; gluconeogenesis. The chain is Fructose-1,6-bisphosphatase class 1 from Brucella suis biovar 1 (strain 1330).